The chain runs to 554 residues: (E)-beta-caryophyllene synthase (554 aa).

Mn(2+) contacts are provided by Asp-313 and Asp-317. A DDXXD motif motif is present at residues 313-317; that stretch reads DDIYD. 2 homodimerization regions span residues 319 to 325 and 391 to 427; these read YGTLDEL and EAQW…LAVI. The Mn(2+) site is built by Asp-457 and Glu-465.

It belongs to the terpene synthase family. Homodimer. It depends on Mn(2+) as a cofactor. Requires Mg(2+) as cofactor. Expressed in peltate glandular trichomes. Present at low levels in flowers, leaves and stems.

It carries out the reaction (2E,6E)-farnesyl diphosphate = (-)-(E)-beta-caryophyllene + diphosphate. The catalysed reaction is (2E,6E)-farnesyl diphosphate = alpha-humulene + diphosphate. It participates in secondary metabolite biosynthesis; terpenoid biosynthesis. In terms of biological role, involved in the biosynthesis of phenolic sesquiterpenes natural products. Sesquiterpene synthase converting (2E,6E)-farnesyl diphosphate (FPP) to (E)-beta-caryophyllene and alpha-humulene. This Origanum vulgare (Wild marjoram) protein is (E)-beta-caryophyllene synthase.